The sequence spans 133 residues: Cytochrome b5 (133 aa).

Residues glutamate 4–lysine 86 form the Cytochrome b5 heme-binding domain. Histidine 45 and histidine 69 together coordinate heme. A helical transmembrane segment spans residues serine 108–tyrosine 128.

This sequence belongs to the cytochrome b5 family. Interacts with alternative squalene epoxidase PHATRDRAFT_45494.

The protein resides in the endoplasmic reticulum membrane. In terms of biological role, hemoprotein that functions as an electron carrier for membrane bound monooxygenases involved in sterol biosynthesis. This is Cytochrome b5 from Phaeodactylum tricornutum (strain CCAP 1055/1).